The primary structure comprises 508 residues: Maturase K (508 aa).

It belongs to the intron maturase 2 family. MatK subfamily.

The protein resides in the plastid. Its subcellular location is the chloroplast. Its function is as follows. Usually encoded in the trnK tRNA gene intron. Probably assists in splicing its own and other chloroplast group II introns. The sequence is that of Maturase K from Ranunculus glacialis (Glacier buttercup).